The following is a 939-amino-acid chain: AP-2 complex subunit alpha-2 (939 aa).

A 1,2-diacyl-sn-glycero-3-phospho-(1D-myo-inositol-3,4,5-trisphosphate) contacts are provided by residues arginine 11–glycine 12, lysine 43, tyrosine 53, and lysine 57–lysine 61. A disordered region spans residues leucine 612–serine 681. Low complexity predominate over residues proline 646 to alanine 667. The span at proline 668–serine 677 shows a compositional bias: pro residues.

Belongs to the adaptor complexes large subunit family. Adaptor protein complex 2 (AP-2) is a heterotetramer composed of two large adaptins (alpha-type subunit AP2A1 or AP2A2 and beta-type subunit AP2B1), a medium adaptin (mu-type subunit AP2M1) and a small adaptin (sigma-type subunit AP2S1). Binds EPN1, EPS15, AMPH, SNAP91 and BIN1. Interacts with HIP1. Interacts with DGKD. Interacts with DENND1A, DENND1B and DENND1C. Interacts with FCHO1 and DAB2. Interacts with ATAT1; this interaction is required for efficient alpha-tubulin acetylation by ATAT1. Interacts with KIAA1107. Together with AP2B1 and AP2M1, it interacts with ADAM10; this interaction facilitates ADAM10 endocytosis from the plasma membrane during long-term potentiation in hippocampal neurons. Interacts with CLN3 (via dileucine motif). Interacts with ABCB11; this interaction regulates cell membrane expression of ABCB11 through its internalization in a clathrin-dependent manner and its subsequent degradation. Interacts with Cacfd1. Interacts with DNAJC6. As to expression, expressed in the brain (at protein level).

It localises to the cell membrane. The protein resides in the membrane. The protein localises to the coated pit. Functionally, component of the adaptor protein complex 2 (AP-2). Adaptor protein complexes function in protein transport via transport vesicles in different membrane traffic pathways. Adaptor protein complexes are vesicle coat components and appear to be involved in cargo selection and vesicle formation. AP-2 is involved in clathrin-dependent endocytosis in which cargo proteins are incorporated into vesicles surrounded by clathrin (clathrin-coated vesicles, CCVs) which are destined for fusion with the early endosome. The clathrin lattice serves as a mechanical scaffold but is itself unable to bind directly to membrane components. Clathrin-associated adaptor protein (AP) complexes which can bind directly to both the clathrin lattice and to the lipid and protein components of membranes are considered to be the major clathrin adaptors contributing the CCV formation. AP-2 also serves as a cargo receptor to selectively sort the membrane proteins involved in receptor-mediated endocytosis. AP-2 seems to play a role in the recycling of synaptic vesicle membranes from the presynaptic surface. AP-2 recognizes Y-X-X-[FILMV] (Y-X-X-Phi) and [ED]-X-X-X-L-[LI] endocytosis signal motifs within the cytosolic tails of transmembrane cargo molecules. AP-2 may also play a role in maintaining normal post-endocytic trafficking through the ARF6-regulated, non-clathrin pathway. During long-term potentiation in hippocampal neurons, AP-2 is responsible for the endocytosis of ADAM10. The AP-2 alpha subunit binds polyphosphoinositide-containing lipids, positioning AP-2 on the membrane. The AP-2 alpha subunit acts via its C-terminal appendage domain as a scaffolding platform for endocytic accessory proteins. The AP-2 alpha and AP-2 sigma subunits are thought to contribute to the recognition of the [ED]-X-X-X-L-[LI] motif. The sequence is that of AP-2 complex subunit alpha-2 (AP2A2) from Homo sapiens (Human).